The primary structure comprises 240 residues: MAGHSKWKNIQKRKNAQDAKRGKIFMKLAKEIYVAAKEGGADPEANSALRLVIEKAKGANMPNENIDRAIKKAAGGQDGSSYEEITYEGYGPSGIAVMVECVTDNKNRTASNVRTAFNKNGGSLGESGCVAFLFERKGFITIDRTERQIEEDELMLDVLEAGGEELRIEEDLYEVFTEPEHFEEVKTALESKYLISSAEVTMLPNTYAEADDQAVEKLETLIDVLEDDDDVQEVYTNYRS.

This sequence belongs to the TACO1 family.

Its subcellular location is the cytoplasm. This chain is Probable transcriptional regulatory protein YrbC (yrbC), found in Bacillus subtilis (strain 168).